A 270-amino-acid chain; its full sequence is Formamidopyrimidine-DNA glycosylase (270 aa).

Pro2 (schiff-base intermediate with DNA) is an active-site residue. Glu3 functions as the Proton donor in the catalytic mechanism. The active-site Proton donor; for beta-elimination activity is the Lys58. Residues His91, Arg110, and Arg151 each coordinate DNA. An FPG-type zinc finger spans residues 236-270 (FVYGRGGEFCKVCGSTLREIRLGQRASVYCPRCQR). Arg260 (proton donor; for delta-elimination activity) is an active-site residue.

It belongs to the FPG family. In terms of assembly, monomer. Zn(2+) serves as cofactor.

The catalysed reaction is Hydrolysis of DNA containing ring-opened 7-methylguanine residues, releasing 2,6-diamino-4-hydroxy-5-(N-methyl)formamidopyrimidine.. The enzyme catalyses 2'-deoxyribonucleotide-(2'-deoxyribose 5'-phosphate)-2'-deoxyribonucleotide-DNA = a 3'-end 2'-deoxyribonucleotide-(2,3-dehydro-2,3-deoxyribose 5'-phosphate)-DNA + a 5'-end 5'-phospho-2'-deoxyribonucleoside-DNA + H(+). In terms of biological role, involved in base excision repair of DNA damaged by oxidation or by mutagenic agents. Acts as a DNA glycosylase that recognizes and removes damaged bases. Has a preference for oxidized purines, such as 7,8-dihydro-8-oxoguanine (8-oxoG). Has AP (apurinic/apyrimidinic) lyase activity and introduces nicks in the DNA strand. Cleaves the DNA backbone by beta-delta elimination to generate a single-strand break at the site of the removed base with both 3'- and 5'-phosphates. This is Formamidopyrimidine-DNA glycosylase from Pseudomonas aeruginosa (strain LESB58).